We begin with the raw amino-acid sequence, 147 residues long: Nudix hydrolase 1 (147 aa).

Residue S2 is modified to N-acetylserine. The Nudix hydrolase domain maps to 7–140; it reads IPRVAVVVFI…EKLFGSGFNP (134 aa). The Nudix box signature appears at 41 to 62; the sequence is GHLEFGESFEECAAREVMEETG. Positions 56 and 60 each coordinate Mg(2+).

Belongs to the Nudix hydrolase family. In terms of assembly, homodimer. Requires Mg(2+) as cofactor. Mn(2+) serves as cofactor. Expressed in roots, stems and leaves.

It localises to the cytoplasm. The enzyme catalyses 7,8-dihydroneopterin 3'-triphosphate + H2O = 7,8-dihydroneopterin 3'-phosphate + diphosphate + H(+). It catalyses the reaction NAD(+) + H2O = beta-nicotinamide D-ribonucleotide + AMP + 2 H(+). The catalysed reaction is NADH + H2O = reduced beta-nicotinamide D-ribonucleotide + AMP + 2 H(+). It carries out the reaction 8-oxo-dGTP + H2O = 8-oxo-dGMP + diphosphate + H(+). In terms of biological role, mediates the hydrolysis of some nucleoside diphosphate derivatives. Its substrate specificity is unclear. In vitro, it can use NTP, dNTP, 8-oxo-GTP, 8-oxo-dGTP, dGTP, dATP, dTTP or dihydroneopterin triphosphate (DHNTP) as substrate. Has some NADH pyrophosphatase activity in vitro; however, such activity may not be relevant in vivo due to the high concentration of manganese used during the experiments. Plays an important role in protection against oxidative DNA and RNA damage by removing oxidatively damaged form of guanine. The protein is Nudix hydrolase 1 (NUDT1) of Arabidopsis thaliana (Mouse-ear cress).